The chain runs to 346 residues: MEKLARKSVQKLTPYLSARRIGGTGDVWLNANESPFDNEYRTNFARLNRYSDCQPKALIAAYAAYAGVKPEQTLTSRGADEGIELLIRAFCEPNEDAILYCPPTYGMYSVSAETIGVERKTVPLTEDWQLDLSGIEANLDKVKLVFVCSPNNPTGNLVKREDIIALLEMTKDRAIVVMDEAYIDFCPEASTVDLLAQYSNLAILRTLSKAFALAGLRCGFTLANEELINVLLKVIAPYPVPVPVAEIATQALSEAGLARAKFQVLDLNANRAYLQVGLSMIAGLEVFEGWGNYLLVKFPNGDELFKAAWESGIILRNSPIKDCVRISVGSRDECEKTLGFIRNYYS.

At Lys209 the chain carries N6-(pyridoxal phosphate)lysine.

This sequence belongs to the class-II pyridoxal-phosphate-dependent aminotransferase family. Histidinol-phosphate aminotransferase subfamily. In terms of assembly, homodimer. Pyridoxal 5'-phosphate serves as cofactor.

The catalysed reaction is L-histidinol phosphate + 2-oxoglutarate = 3-(imidazol-4-yl)-2-oxopropyl phosphate + L-glutamate. Its pathway is amino-acid biosynthesis; L-histidine biosynthesis; L-histidine from 5-phospho-alpha-D-ribose 1-diphosphate: step 7/9. The chain is Histidinol-phosphate aminotransferase from Vibrio vulnificus (strain YJ016).